We begin with the raw amino-acid sequence, 559 residues long: MEYDYIIIGAGSAGNVLAARLTEESDVSVLLLEAGGPDYRLDFRTQMPAALAFPLQGKRYNWAYETDPEPHMNDRRMECGRGKGLGGSSLINGMCYIRGNAMDFDHWATMSGLEDWSYLDCLPYFRKAETRDVGANDYHGASGPVSVTTPKMGNNELFHAMVEAGVQAGYPRTDDLNGYQQEGFGPMDRTVTPKGRRASTARGYLDQAKSRKNLTIVTHALTDRILFDGKRAVGVAYFKGESAQTAKARREVLLCAGAIASPQILQRSGVGPKDLLQRLDISVVHDLPGVGENLQDHLEMYLQYACKEPVSLYPALQWFNQPKIGAEWLFNGTGIGASNQFEAGGFIRSRDEFTWPNIQYHFLPVAINYNGSNAVKEHGFQAHVGSMRSLSRGRVQVRSKDAREHPSILFNYMSTEQDWQEFRDAIRITREIMAQPALDKYRGREISPGLAVQTDEELDEFIRTHAETAFHPSCSCKMGEDDMSVVDGQGCVHGMEGLRVVDASIMPQIITGNLNATTIMIAEKIADRIRRRQPLPRSKARYYVAGSTPVRKAPLKPAS.

4–33 (DYIIIGAGSAGNVLAARLTEESDVSVLLLE) contributes to the FAD binding site. Residues 182–202 (EGFGPMDRTVTPKGRRASTAR) are disordered. The active-site Proton acceptor is His-471.

The protein belongs to the GMC oxidoreductase family. FAD serves as cofactor.

It carries out the reaction choline + A = betaine aldehyde + AH2. The catalysed reaction is betaine aldehyde + NAD(+) + H2O = glycine betaine + NADH + 2 H(+). Its pathway is amine and polyamine biosynthesis; betaine biosynthesis via choline pathway; betaine aldehyde from choline (cytochrome c reductase route): step 1/1. Functionally, involved in the biosynthesis of the osmoprotectant glycine betaine. Catalyzes the oxidation of choline to betaine aldehyde and betaine aldehyde to glycine betaine at the same rate. The protein is Oxygen-dependent choline dehydrogenase of Pectobacterium atrosepticum (strain SCRI 1043 / ATCC BAA-672) (Erwinia carotovora subsp. atroseptica).